A 1506-amino-acid chain; its full sequence is MESLDRRRTGSEQEEGFGVQSRRATDLGMVPNLRRSNSSLCKSRRFLCSFSSEKQENLSSWIPENIKKKECVYFVESSKLSDAGKVVCACGYTHEQHLEVAIKPHTFQGKEWDPKKHVQEMPTDAFGDIVFTDLSQKVGKYVRVSQDTPSSVIYQLMTQHWGLDVPNLLISVTGGAKNFNMKLRLKSIFRRGLVKVAQTTGAWIITGGSHTGVMKQVGEAVRDFSLSSSCKEGEVITIGVATWGTIHNREGLIHPMGGFPAEYMLDEEGQGNLTCLDSNHSHFILVDDGTHGQYGVEIPLRTKLEKFISEQTKERGGVAIKIPIVCVVLEGGPGTLHTIYNAINNGTPCVIVEGSGRVADVIAQVATLPVSEITISLIQQKLSIFFQEMFETFTENQIVEWTKKIQDIVRRRQLLTIFREGKDGQQDVDVAILQALLKASRSQDHFGHENWDHQLKLAVAWNRVDIARSEIFTDEWQWKPADLHPMMTAALISNKPEFVRLFLENGVRLKEFVTWDTLLCLYENLEPSCLFHSKLQKVLAEEQRLAYASATPRLHMHHVAQVLRELLGDSTQLLYPRPRYTDRPRLSMTVPHIKLNVQGVSLRSLYKRSTGHVTFTIDPVRDLLIWAVIQNHRELAGIIWAQSQDCTAAALACSKILKELSKEEEDTDSSEEMLALADEFEHRAIGVFTECYRKDEERAQKLLVRVSEAWGKTTCLQLALEAKDMKFVSHGGIQAFLTKVWWGQLCVDNGLWRIILCMLAFPLLFTGFISFREKRLQALCRPARVRAFFNAPVVIFHMNILSYFAFLCLFAYVLMVDFQPSPSWCEYLIYLWLFSLVCEETRQLFYDPDGCGLMKMASLYFSDFWNKLDVGAILLFIVGLTCRLIPATLYPGRIILSLDFIMFCLRLMHIFTISKTLGPKIIIVKRMMKDVFFFLFLLAVWVVSFGVAKQAILIHNESRVDWIFRGVVYHSYLTIFGQIPTYIDGVNFSMDQCSPNGTDPYKPKCPESDWTGQAPAFPEWLTVTLLCLYLLFANILLLNLLIAMFNYTFQEVQEHTDQIWKFQRHDLIEEYHGRPPAPPPLILLSHLQLLIKRIVLKIPAKRHKQLKNKLEKNEETALLSWELYLKENYLQNQQYQQKQRPEQKIQDISEKVDTMVDLLDMDQVKRSGSTEQRLASLEEQVTQVTRALHWIVTTLKDSGFGSGAGALTLAPQRAFDEPDAELSIRRKVEEPGDGYHVSARHLLYPNARIMRFPVPNEKVPWAAEFLIYDPPFYTAEKDVALTDPVGDTAEPLSKISYNVVDGPTDRRSFHGVYVVEYGFPLNPMGRTGLRGRGSLSWFGPNHTLQPVVTRWKRNQGGAICRKSVRKMLEVLVMKLPRSEHWALPGGSREPGEMLPRKLKRVLRQEFWVAFETLLMQGTEVYKGYVDDPRNTDNAWIETVAVSIHFQDQNDMELKRLEENLHTHDPKELTRDLKLSTEWQVVDRRIPLYANHKTILQKVASLFGAHF.

A compositionally biased stretch (basic and acidic residues) spans 1-11 (MESLDRRRTGS). Positions 1–22 (MESLDRRRTGSEQEEGFGVQSR) are disordered. Over 1 to 750 (MESLDRRRTG…WWGQLCVDNG (750 aa)) the chain is Cytoplasmic. Residues Thr173, Asn178, Arg301, Gly332, and Thr335 each contribute to the ADP-D-ribose site. The residue at position 738 (Thr738) is a Phosphothreonine. Residues 751-767 (LWRIILCMLAFPLLFTG) lie within the membrane without spanning it. Topologically, residues 768-792 (FISFREKRLQALCRPARVRAFFNAP) are cytoplasmic. The helical transmembrane segment at 793–813 (VVIFHMNILSYFAFLCLFAYV) threads the bilayer. Topologically, residues 814 to 824 (LMVDFQPSPSW) are extracellular. A helical transmembrane segment spans residues 825-845 (CEYLIYLWLFSLVCEETRQLF). Ca(2+)-binding residues include Glu840 and Gln843. The Cytoplasmic portion of the chain corresponds to 846 to 864 (YDPDGCGLMKMASLYFSDF). A helical transmembrane segment spans residues 865–885 (WNKLDVGAILLFIVGLTCRLI). Asn866 contributes to the Ca(2+) binding site. Residues 886-893 (PATLYPGR) lie on the Extracellular side of the membrane. The chain crosses the membrane as a helical span at residues 894-914 (IILSLDFIMFCLRLMHIFTIS). At 915–926 (KTLGPKIIIVKR) the chain is on the cytoplasmic side. Residues 927–947 (MMKDVFFFLFLLAVWVVSFGV) form a helical membrane-spanning segment. The Extracellular segment spans residues 948–967 (AKQAILIHNESRVDWIFRGV). The segment at residues 968–982 (VYHSYLTIFGQIPTY) is an intramembrane region (pore-forming). Residues 976–979 (FGQI) carry the Selectivity filter motif. Residues 983–1019 (IDGVNFSMDQCSPNGTDPYKPKCPESDWTGQAPAFPE) lie on the Extracellular side of the membrane. A disulfide bridge connects residues Cys993 and Cys1005. Residues 1020–1041 (WLTVTLLCLYLLFANILLLNLL) traverse the membrane as a helical segment. Residues 1042–1076 (IAMFNYTFQEVQEHTDQIWKFQRHDLIEEYHGRPP) are Cytoplasmic-facing. Position 1070 (Glu1070) interacts with Ca(2+). Residues 1077–1095 (APPPLILLSHLQLLIKRIV) lie within the membrane without spanning it. The Cytoplasmic portion of the chain corresponds to 1096 to 1506 (LKIPAKRHKQ…KVASLFGAHF (411 aa)). The region spanning 1350-1501 (RWKRNQGGAI…KTILQKVASL (152 aa)) is the Nudix hydrolase domain. Ser1378 serves as a coordination point for ADP-D-ribose. The short motif at 1386–1407 (GSREPGEMLPRKLKRVLRQEFW) is the Nudix box element. ADP-D-ribose-binding residues include Asp1427, Arg1429, Tyr1488, and Asn1490.

This sequence belongs to the transient receptor (TC 1.A.4) family. LTrpC subfamily. TRPM2 sub-subfamily. Homotetramer. In terms of processing, protein kinase C (PKC)-mediated phosphorylation of TRPM2 at Thr-738 counteracts the effect of cytosolic Ca(2+) and elevates the temperature threshold. Detected in the preoptic area of the hypothalamus, a brain area involved in body temperature control. Detected in beta-cells in pancreas islets (at protein level). Detected in brain cortex, striatum, hippocampus CA1, CA2 and CA3 layers, and in the Purkinje cell layer in cerebellum. Widely expressed, with highest levels in lung, spleen, eye and brain. Detected in dendritic cells and in polymorphonuclear neutrophils.

Its subcellular location is the cell membrane. The protein resides in the perikaryon. It is found in the cell projection. The protein localises to the cytoplasmic vesicle. It localises to the lysosome. The catalysed reaction is Ca(2+)(in) = Ca(2+)(out). It carries out the reaction Na(+)(in) = Na(+)(out). Activated by intracellular ADP-ribose, beta-NAD (NAD(+)) and similar compounds, and by oxidative stress caused by reactive oxygen or nitrogen species. Ca(2+) and PI(4,5)P2 are required for channel opening by ADP-ribose. Activated by moderate heat (35 to 40 degrees Celsius). Activation by ADP-ribose and beta-NAD is strongly increased by moderate heat (35 to 40 degrees Celsius). Likewise, reactive oxygen species lower the threshold for activation by moderate heat (37 degrees Celsius). Inactivated by exposure to extracellular pH between 4.0 and 6.5; irreversibly inactivated when open channels are exposed to extracellular pH between 4.0 and 6.5, while pre-exposure of closed channels to extracellular pH 5.5 gives rise to currents that rapidly inactivate, but protects against irreversible inactivation. Inactivated by intracellular ATP. Activated by arachidonic acid. Inhibited by 2-aminoethyl diphenylborinate (2-APB). Functionally, nonselective, voltage-independent cation channel that mediates Na(+) and Ca(2+) influx, leading to increased cytoplasmic Ca(2+) levels. Functions as a ligand-gated ion channel, gated by intracellular adenosine diphosphate ribose (ADP-ribose), Ca(2+), warm temperature, and oxidative stress. The precise physiological activators are under debate; the true, physiological activators may be ADP-ribose and ADP-ribose-2'-phosphate. Binding of ADP-ribose to the cytoplasmic Nudix domain causes a conformation change; the channel is primed but still requires Ca(2+) binding to trigger channel opening. Extracellular Ca(2+) passes through the channel and increases channel activity. Also contributes to Ca(2+) release from intracellular stores in response to ADP-ribose. Plays a role in numerous processes that involve signaling via intracellular Ca(2+) levels. Besides, mediates the release of lysosomal Zn(2+) stores in response to reactive oxygen species, leading to increased cytosolic Zn(2+) levels. Plays a role in mediating behavorial and physiological responses to moderate heat and thereby contributes to body temperature homeostasis. Plays a role in insulin secretion, a process that requires increased cytoplasmic Ca(2+) levels. Required for normal IFNG and cytokine secretion and normal innate immune immunity in response to bacterial infection. Required for normal phagocytosis and cytokine release by macrophages exposed to zymosan (in vitro). Plays a role in dendritic cell differentiation and maturation, and in dendritic cell chemotaxis via its role in regulating cytoplasmic Ca(2+) levels. Plays a role in the regulation of the reorganization of the actin cytoskeleton and filopodia formation in response to reactive oxygen species via its function in increasing cytoplasmic Ca(2+) and Zn(2+) levels. Confers susceptibility to cell death following oxidative stress. In Mus musculus (Mouse), this protein is Transient receptor potential cation channel subfamily M member 2 (Trpm2).